Here is a 901-residue protein sequence, read N- to C-terminus: Protein translocase subunit SecA (901 aa).

ATP contacts are provided by residues Gln87, 105–109, and Asp512; that span reads GEGKT. The segment at 852–901 is disordered; the sequence is AQMQQLSHQSDDEAAAQDLAAQTGERKVGRNDPCPCGSGKKYKQCHGRLS. Zn(2+) contacts are provided by Cys885, Cys887, Cys896, and His897. Over residues 891–901 the composition is skewed to basic residues; that stretch reads KKYKQCHGRLS.

The protein belongs to the SecA family. In terms of assembly, monomer and homodimer. Part of the essential Sec protein translocation apparatus which comprises SecA, SecYEG and auxiliary proteins SecDF-YajC and YidC. Zn(2+) is required as a cofactor.

It localises to the cell inner membrane. Its subcellular location is the cytoplasm. The enzyme catalyses ATP + H2O + cellular proteinSide 1 = ADP + phosphate + cellular proteinSide 2.. Part of the Sec protein translocase complex. Interacts with the SecYEG preprotein conducting channel. Has a central role in coupling the hydrolysis of ATP to the transfer of proteins into and across the cell membrane, serving both as a receptor for the preprotein-SecB complex and as an ATP-driven molecular motor driving the stepwise translocation of polypeptide chains across the membrane. This is Protein translocase subunit SecA from Klebsiella pneumoniae subsp. pneumoniae (strain ATCC 700721 / MGH 78578).